The sequence spans 334 residues: Porphobilinogen deaminase (334 aa).

Cys255 is modified (S-(dipyrrolylmethanemethyl)cysteine).

This sequence belongs to the HMBS family. In terms of assembly, monomer. Requires dipyrromethane as cofactor.

It catalyses the reaction 4 porphobilinogen + H2O = hydroxymethylbilane + 4 NH4(+). It functions in the pathway porphyrin-containing compound metabolism; protoporphyrin-IX biosynthesis; coproporphyrinogen-III from 5-aminolevulinate: step 2/4. Tetrapolymerization of the monopyrrole PBG into the hydroxymethylbilane pre-uroporphyrinogen in several discrete steps. The sequence is that of Porphobilinogen deaminase from Burkholderia orbicola (strain MC0-3).